The sequence spans 264 residues: 3-methyl-2-oxobutanoate hydroxymethyltransferase (264 aa).

2 residues coordinate Mg(2+): aspartate 45 and aspartate 84. Residues 45 to 46, aspartate 84, and lysine 112 contribute to the 3-methyl-2-oxobutanoate site; that span reads DS. Residue glutamate 114 participates in Mg(2+) binding. Glutamate 181 acts as the Proton acceptor in catalysis.

This sequence belongs to the PanB family. Homodecamer; pentamer of dimers. The cofactor is Mg(2+).

The protein resides in the cytoplasm. The catalysed reaction is 3-methyl-2-oxobutanoate + (6R)-5,10-methylene-5,6,7,8-tetrahydrofolate + H2O = 2-dehydropantoate + (6S)-5,6,7,8-tetrahydrofolate. Its pathway is cofactor biosynthesis; (R)-pantothenate biosynthesis; (R)-pantoate from 3-methyl-2-oxobutanoate: step 1/2. Its function is as follows. Catalyzes the reversible reaction in which hydroxymethyl group from 5,10-methylenetetrahydrofolate is transferred onto alpha-ketoisovalerate to form ketopantoate. The protein is 3-methyl-2-oxobutanoate hydroxymethyltransferase of Shewanella piezotolerans (strain WP3 / JCM 13877).